The chain runs to 312 residues: GDP-L-fucose synthase (312 aa).

11–17 (GGRGMVG) is an NADP(+) binding site. Y136 functions as the Proton donor/acceptor in the catalytic mechanism. Residues K140 and H179 each contribute to the NADP(+) site. 3 residues coordinate substrate: K187, W202, and R209.

This sequence belongs to the NAD(P)-dependent epimerase/dehydratase family. Fucose synthase subfamily.

It catalyses the reaction GDP-beta-L-fucose + NADP(+) = GDP-4-dehydro-alpha-D-rhamnose + NADPH + H(+). It participates in nucleotide-sugar biosynthesis; GDP-L-fucose biosynthesis via de novo pathway; GDP-L-fucose from GDP-alpha-D-mannose: step 2/2. Its function is as follows. Catalyzes the two-step NADP-dependent conversion of GDP-4-dehydro-6-deoxy-D-mannose to GDP-fucose, involving an epimerase and a reductase reaction. The chain is GDP-L-fucose synthase from Azorhizobium caulinodans (strain ATCC 43989 / DSM 5975 / JCM 20966 / LMG 6465 / NBRC 14845 / NCIMB 13405 / ORS 571).